Here is a 2594-residue protein sequence, read N- to C-terminus: Immunoglobulin superfamily member 10 (2594 aa).

The first 25 residues, 1–25 (MQKRGREVSCLLISLTAICLVVTPG), serve as a signal peptide directing secretion. One can recognise an LRRNT domain in the interval 29 to 56 (CPRRCACYVPTEVHCTFRYLTSIPDGIP). LRR repeat units follow at residues 58–79 (NVERVNLGYNSLTRLTENDFSG), 82–103 (RLELLMLHSNGIHRVSDKTFSG), 106–127 (SLQVLKMSYNKVQIIEKDTLYG), 130–151 (SLTRLHLDHNNIEFINPEAFYG), 154–175 (LLRLVHLEGNRLTKLHPDTFVS), and 186–207 (FIKYLYLSDNFLTSLPKEMVSS). One can recognise an LRRCT domain in the interval 219–281 (NPWTCDCHLK…VPSGSFLCTK (63 aa)). Asn439 carries an N-linked (GlcNAc...) asparagine glycan. 2 Ig-like C2-type domains span residues 461–567 (PKAE…YRIT) and 571–661 (PYVE…FQVS). Cystine bridges form between Cys497–Cys551 and Cys595–Cys645. The N-linked (GlcNAc...) asparagine glycan is linked to Asn627. Positions 670 to 685 (IEHDRDIDGSGLEEPK) are enriched in basic and acidic residues. Disordered stretches follow at residues 670-725 (IEHD…RDLT) and 963-1008 (VSSN…GRER). Basic residues predominate over residues 715 to 725 (IHKKNKHRDLT). Residues 972–984 (TTKDPGFSKRPSD) are compositionally biased toward basic and acidic residues. Residues 985 to 1003 (SHTTAPSLFQTPRNNSTGN) show a composition bias toward polar residues. Residue Asn1044 is glycosylated (N-linked (GlcNAc...) asparagine). Disordered stretches follow at residues 1228–1251 (TATKPPEKAPLLPTDHGSSSPSTT), 1333–1364 (VRSKKAKDQTKGSLKNRKGPTITPRQISGYST), and 1428–1457 (SQESTAMKRASATPPLLSSGAPRMPTPSPP). Basic and acidic residues predominate over residues 1333-1342 (VRSKKAKDQT). Polar residues predominate over residues 1355 to 1364 (TPRQISGYST). 10 consecutive Ig-like C2-type domains span residues 1619-1710 (PRII…VTLS), 1715-1807 (PARI…VKIQ), 1812-1901 (PPVI…RRVV), 1912-2005 (PRIE…VRLR), 2008-2106 (PAKI…VHLT), 2112-2200 (PRIR…YKLD), 2205-2302 (PPLI…LKVL), 2308-2398 (PTFR…ILLE), 2403-2493 (PVIL…VPVT), and 2499-2592 (PRII…TYIQ). 3 cysteine pairs are disulfide-bonded: Cys1641/Cys1694, Cys1738/Cys1791, and Cys1835/Cys1888. An LRR 11 repeat occupies 1658–1681 (SGREISRGIQKTRFHVLPNGTLSI). Residues Asn1676, Asn1780, Asn1870, and Asn1933 are each glycosylated (N-linked (GlcNAc...) asparagine). 7 cysteine pairs are disulfide-bonded: Cys1934/Cys1987, Cys2031/Cys2090, Cys2134/Cys2184, Cys2232/Cys2284, Cys2330/Cys2382, Cys2425/Cys2477, and Cys2521/Cys2576. Residue Asn2072 is glycosylated (N-linked (GlcNAc...) asparagine). A glycan (N-linked (GlcNAc...) asparagine) is linked at Asn2364. Tyr2574 carries the phosphotyrosine modification.

As to expression, in the embryo, expressed in the nasal mesenchyme.

It localises to the secreted. Functionally, involved in the control of early migration of neurons expressing gonadotropin-releasing hormone (GNRH neurons). May be involved in the maintenance of osteochondroprogenitor cells pool. The chain is Immunoglobulin superfamily member 10 (Igsf10) from Mus musculus (Mouse).